The chain runs to 477 residues: C4-dicarboxylate transport protein 1 (477 aa).

8 consecutive transmembrane segments (helical) span residues 21–39 (PYVQ…GHFY), 59–76 (MIIA…IAGM), 89–111 (AMVY…GNVI), 162–179 (ILQV…LAMV), 200–221 (LVGI…FTIG), 231–253 (LAML…LGAV), 342–364 (VLLL…AGFV), and 368–387 (ATLS…ILGV). The segment at 435–477 (SAGQPLITPAPSNSAASLPVESPGWSQTPDDRAAGSKQTLAGR) is disordered.

Belongs to the dicarboxylate/amino acid:cation symporter (DAACS) (TC 2.A.23) family.

The protein localises to the cell inner membrane. Responsible for the transport of dicarboxylates such as succinate, fumarate, and malate from the periplasm across the membrane. This transport system plays an important role in the energy supply of rhizobium-legume symbionts. This chain is C4-dicarboxylate transport protein 1 (dctA1), found in Mesorhizobium japonicum (strain LMG 29417 / CECT 9101 / MAFF 303099) (Mesorhizobium loti (strain MAFF 303099)).